Consider the following 592-residue polypeptide: V-type ATP synthase alpha chain (592 aa).

Residue 232 to 239 (GPFGAGKT) participates in ATP binding.

Belongs to the ATPase alpha/beta chains family.

The enzyme catalyses ATP + H2O + 4 H(+)(in) = ADP + phosphate + 5 H(+)(out). In terms of biological role, produces ATP from ADP in the presence of a proton gradient across the membrane. The V-type alpha chain is a catalytic subunit. This Clostridium botulinum (strain Eklund 17B / Type B) protein is V-type ATP synthase alpha chain.